The primary structure comprises 51 residues: Small polypeptide DEVIL 1 (51 aa).

Positions 1-25 are disordered; the sequence is MEMKRVMMSSAERSKEKKRSISRRL. The segment covering 16-25 has biased composition (basic residues); that stretch reads EKKRSISRRL. Residues 20-51 are required for DVL/RTFL small polypeptide activity; sequence SISRRLGKYMKEQKGRIYIIRRCMVMLLCSHD. The chain crosses the membrane as a helical span at residues 28-44; it reads YMKEQKGRIYIIRRCMV.

This sequence belongs to the DVL/RTFL small polypeptides family. In terms of tissue distribution, mostly expressed in leaves and, to a lower extent, in roots and stems.

It localises to the cell membrane. In terms of biological role, small polypeptide acting as a regulatory molecule which coordinates cellular responses required for differentiation, growth and development, including leaves shape, pedicule elongation, inflorescence organization and fruit maturation, probably by restricting polar cell proliferation in lateral organs and coordinating socket cell recruitment and differentiation at trichome sites. The polypeptide is Small polypeptide DEVIL 1 (Arabidopsis thaliana (Mouse-ear cress)).